We begin with the raw amino-acid sequence, 423 residues long: Glutamine synthetase, chloroplastic (423 aa).

Residues 1–51 (MAQAVVPAMQCRVGVKAAAGRVWSAGRTRTGRGGASPGFKVMAVSTGSTGV) constitute a chloroplast transit peptide. A GS beta-grasp domain is found at 70–150 (VIAEYIWVGG…VICDTYTPQG (81 aa)). Positions 89–115 (RTISKPVEDPSELPKWNYDGSSTGQAP) are disordered. Residues 154-423 (PTNKRHRAAQ…LAAKKLALKV (270 aa)) enclose the GS catalytic domain.

This sequence belongs to the glutamine synthetase family. Homooctamer.

It localises to the plastid. Its subcellular location is the chloroplast. The catalysed reaction is L-glutamate + NH4(+) + ATP = L-glutamine + ADP + phosphate + H(+). The light-modulated chloroplast enzyme, encoded by a nuclear gene and expressed primarily in leaves, is responsible for the reassimilation of the ammonia generated by photorespiration. The sequence is that of Glutamine synthetase, chloroplastic (GLN2) from Zea mays (Maize).